The sequence spans 183 residues: Ribosome-recycling factor (183 aa).

The protein belongs to the RRF family.

The protein resides in the cytoplasm. Responsible for the release of ribosomes from messenger RNA at the termination of protein biosynthesis. May increase the efficiency of translation by recycling ribosomes from one round of translation to another. The polypeptide is Ribosome-recycling factor (Christiangramia forsetii (strain DSM 17595 / CGMCC 1.15422 / KT0803) (Gramella forsetii)).